A 636-amino-acid polypeptide reads, in one-letter code: Carbon monoxide dehydrogenase 2 (636 aa).

The [4Fe-4S] cluster site is built by C39, C47, C48, C51, C56, and C70. Positions 261, 295, 333, 446, 476, and 526 each coordinate [Ni-4Fe-5S] cluster.

Belongs to the Ni-containing carbon monoxide dehydrogenase family. As to quaternary structure, homodimer. Requires [4Fe-4S] cluster as cofactor. It depends on [Ni-4Fe-5S] cluster as a cofactor.

It is found in the cytoplasm. Its subcellular location is the cell membrane. It catalyses the reaction CO + 2 oxidized [2Fe-2S]-[ferredoxin] + H2O = 2 reduced [2Fe-2S]-[ferredoxin] + CO2 + 2 H(+). With respect to regulation, inactivated by O(2). Its function is as follows. CODH oxidizes carbon monoxide coupled, via CooF, to the reduction of a hydrogen cation by a hydrogenase (possibly CooH). This Carboxydothermus hydrogenoformans (strain ATCC BAA-161 / DSM 6008 / Z-2901) protein is Carbon monoxide dehydrogenase 2 (cooS2).